The chain runs to 182 residues: MSDQVLSALEHFFLRWQRDGEARRGLPLCEWEADWRSPCELDEPKEGRVAWRPHRRAEPADFTAMNEALELTLHPAAQALFGGWFSRPVPCLYKGLRLEFVLPWNEADLDLLKENLIGHLLMLRKLKRSPSLFIATTRNEMTLVSLDNESGQVWLEWLDSGRRLVLAPSLPAFLERLETLPQ.

Belongs to the Syd family.

Its subcellular location is the cell inner membrane. In terms of biological role, interacts with the SecY protein in vivo. May bind preferentially to an uncomplexed state of SecY, thus functioning either as a chelating agent for excess SecY in the cell or as a regulatory factor that negatively controls the translocase function. The sequence is that of Protein Syd from Aeromonas hydrophila subsp. hydrophila (strain ATCC 7966 / DSM 30187 / BCRC 13018 / CCUG 14551 / JCM 1027 / KCTC 2358 / NCIMB 9240 / NCTC 8049).